Consider the following 152-residue polypeptide: Cytochrome c-type biogenesis protein CcmE (152 aa).

At 1–9 the chain is on the cytoplasmic side; sequence MRGLKKQRR. The chain crosses the membrane as a helical; Signal-anchor for type II membrane protein span at residues 10-30; the sequence is IQILIVAAVALTLSSVLIGYA. Residues 31–152 are Periplasmic-facing; it reads LRDGINFFRP…PDGYARDGDS (122 aa). Heme-binding residues include H123 and Y127.

It belongs to the CcmE/CycJ family.

It is found in the cell inner membrane. Functionally, heme chaperone required for the biogenesis of c-type cytochromes. Transiently binds heme delivered by CcmC and transfers the heme to apo-cytochromes in a process facilitated by CcmF and CcmH. The chain is Cytochrome c-type biogenesis protein CcmE from Jannaschia sp. (strain CCS1).